Consider the following 655-residue polypeptide: THO complex subunit 1 (655 aa).

Disordered regions lie at residues 403-427 (ERPA…LGKG) and 539-574 (PSEE…AVTN). Residues 415–431 (RKRQAPEDFLGKGPDRK) carry the Nuclear localization signal motif. Positions 418–427 (QAPEDFLGKG) are enriched in basic and acidic residues. Residues 563–574 (DSPSIQSKAVTN) are compositionally biased toward polar residues. Residues 573–655 (TNSQMDEIAA…NNIADNLSET (83 aa)) form the Death domain.

As to quaternary structure, component of the THO complex. Expressed in the developing neuromast.

The protein resides in the nucleus. It is found in the nucleoplasm. Its subcellular location is the nucleus matrix. It localises to the cytoplasm. The protein localises to the cytosol. Component of the THO subcomplex of the TREX complex which is thought to couple mRNA transcription, processing and nuclear export, and which specifically associates with spliced mRNA and not with unspliced pre-mRNA. Required for efficient export of polyadenylated RNA. The THOC1-THOC2-THOC3 core complex alone is sufficient to bind export factor NXF1-NXT1 and promote ATPase activity of DDX39B. TREX is recruited to spliced mRNAs by a transcription-independent mechanism, binds to mRNA upstream of the exon-junction complex (EJC) and is recruited in a splicing- and cap-dependent manner to a region near the 5' end of the mRNA where it functions in mRNA export to the cytoplasm via the TAP/NXF1 pathway. Regulates transcriptional elongation of a subset of genes. Involved in genome stability by preventing co-transcriptional R-loop formation. May play a role in hair cell formation, hence may be involved in hearing. Functionally, participates in an apoptotic pathway which is characterized by activation of caspase-6, increases in the expression of BAK1 and BCL2L1 and activation of NF-kappa-B. This pathway does not require p53/TP53, nor does the presence of p53/TP53 affect the efficiency of cell killing. Activates a G2/M cell cycle checkpoint prior to the onset of apoptosis. Apoptosis is inhibited by association with RB1. Essential for early embryonic development. Required for normal gene expression during postnatal testis development. This chain is THO complex subunit 1 (thoc1), found in Danio rerio (Zebrafish).